The following is a 319-amino-acid chain: tRNA U34 carboxymethyltransferase (319 aa).

Carboxy-S-adenosyl-L-methionine is bound by residues lysine 88, tryptophan 102, lysine 107, glycine 126, 176 to 177, methionine 192, tyrosine 196, and arginine 311; that span reads LE.

This sequence belongs to the class I-like SAM-binding methyltransferase superfamily. CmoB family. As to quaternary structure, homotetramer.

It carries out the reaction carboxy-S-adenosyl-L-methionine + 5-hydroxyuridine(34) in tRNA = 5-carboxymethoxyuridine(34) in tRNA + S-adenosyl-L-homocysteine + H(+). Functionally, catalyzes carboxymethyl transfer from carboxy-S-adenosyl-L-methionine (Cx-SAM) to 5-hydroxyuridine (ho5U) to form 5-carboxymethoxyuridine (cmo5U) at position 34 in tRNAs. The polypeptide is tRNA U34 carboxymethyltransferase (Azotobacter vinelandii (strain DJ / ATCC BAA-1303)).